Here is a 238-residue protein sequence, read N- to C-terminus: Ribonuclease PH (238 aa).

Residues Arg87 and 125 to 127 (GTR) contribute to the phosphate site.

It belongs to the RNase PH family. In terms of assembly, homohexameric ring arranged as a trimer of dimers.

The catalysed reaction is tRNA(n+1) + phosphate = tRNA(n) + a ribonucleoside 5'-diphosphate. Its function is as follows. Phosphorolytic 3'-5' exoribonuclease that plays an important role in tRNA 3'-end maturation. Removes nucleotide residues following the 3'-CCA terminus of tRNAs; can also add nucleotides to the ends of RNA molecules by using nucleoside diphosphates as substrates, but this may not be physiologically important. Probably plays a role in initiation of 16S rRNA degradation (leading to ribosome degradation) during starvation. The polypeptide is Ribonuclease PH (Synechococcus elongatus (strain ATCC 33912 / PCC 7942 / FACHB-805) (Anacystis nidulans R2)).